An 89-amino-acid polypeptide reads, in one-letter code: Small ribosomal subunit protein uS14 (89 aa).

Belongs to the universal ribosomal protein uS14 family. Part of the 30S ribosomal subunit. Contacts proteins S3 and S10.

Binds 16S rRNA, required for the assembly of 30S particles and may also be responsible for determining the conformation of the 16S rRNA at the A site. The sequence is that of Small ribosomal subunit protein uS14 from Chlorobium chlorochromatii (strain CaD3).